The chain runs to 494 residues: Glycerol kinase 1 (494 aa).

Position 12 (threonine 12) interacts with ADP. ATP-binding residues include threonine 12, threonine 13, and serine 14. Residue threonine 12 coordinates sn-glycerol 3-phosphate. Arginine 16 is an ADP binding site. Sn-glycerol 3-phosphate-binding residues include arginine 82, glutamate 83, tyrosine 134, and aspartate 243. Positions 82, 83, 134, 243, and 244 each coordinate glycerol. 2 residues coordinate ADP: threonine 265 and glycine 308. ATP contacts are provided by threonine 265, glycine 308, glutamine 312, and glycine 408. ADP-binding residues include glycine 408 and asparagine 412.

Belongs to the FGGY kinase family.

It catalyses the reaction glycerol + ATP = sn-glycerol 3-phosphate + ADP + H(+). It functions in the pathway polyol metabolism; glycerol degradation via glycerol kinase pathway; sn-glycerol 3-phosphate from glycerol: step 1/1. Its activity is regulated as follows. Inhibited by fructose 1,6-bisphosphate (FBP). Functionally, key enzyme in the regulation of glycerol uptake and metabolism. Catalyzes the phosphorylation of glycerol to yield sn-glycerol 3-phosphate. This Pseudomonas aeruginosa (strain ATCC 15692 / DSM 22644 / CIP 104116 / JCM 14847 / LMG 12228 / 1C / PRS 101 / PAO1) protein is Glycerol kinase 1.